Here is a 65-residue protein sequence, read N- to C-terminus: Large ribosomal subunit protein bL35 (65 aa).

Belongs to the bacterial ribosomal protein bL35 family.

This is Large ribosomal subunit protein bL35 from Xanthomonas campestris pv. campestris (strain ATCC 33913 / DSM 3586 / NCPPB 528 / LMG 568 / P 25).